The following is a 234-amino-acid chain: (5-formylfuran-3-yl)methyl phosphate synthase (234 aa).

Residue lysine 27 is the Schiff-base intermediate with substrate of the active site. Lysine 85 serves as the catalytic Proton acceptor.

The protein belongs to the MfnB family.

The catalysed reaction is 2 D-glyceraldehyde 3-phosphate = 4-(hydroxymethyl)-2-furancarboxaldehyde phosphate + phosphate + 2 H2O. It functions in the pathway cofactor biosynthesis; methanofuran biosynthesis. Functionally, catalyzes the formation of 4-(hydroxymethyl)-2-furancarboxaldehyde phosphate (4-HFC-P) from two molecules of glyceraldehyde-3-P (GA-3-P). This Methanosarcina mazei (strain ATCC BAA-159 / DSM 3647 / Goe1 / Go1 / JCM 11833 / OCM 88) (Methanosarcina frisia) protein is (5-formylfuran-3-yl)methyl phosphate synthase.